The following is a 176-amino-acid chain: 3-hydroxydecanoyl-[acyl-carrier-protein] dehydratase (176 aa).

The active site involves H75.

It belongs to the thioester dehydratase family. FabA subfamily. Homodimer.

Its subcellular location is the cytoplasm. The catalysed reaction is a (3R)-hydroxyacyl-[ACP] = a (2E)-enoyl-[ACP] + H2O. The enzyme catalyses (3R)-hydroxydecanoyl-[ACP] = (2E)-decenoyl-[ACP] + H2O. It carries out the reaction (2E)-decenoyl-[ACP] = (3Z)-decenoyl-[ACP]. Its pathway is lipid metabolism; fatty acid biosynthesis. Its function is as follows. Necessary for the introduction of cis unsaturation into fatty acids. Catalyzes the dehydration of (3R)-3-hydroxydecanoyl-ACP to E-(2)-decenoyl-ACP and then its isomerization to Z-(3)-decenoyl-ACP. Can catalyze the dehydratase reaction for beta-hydroxyacyl-ACPs with saturated chain lengths up to 16:0, being most active on intermediate chain length. This chain is 3-hydroxydecanoyl-[acyl-carrier-protein] dehydratase, found in Actinobacillus pleuropneumoniae serotype 5b (strain L20).